The chain runs to 805 residues: Ribosome biogenesis protein ERB1 (805 aa).

The interval 1–105 (MVKGRKSQKA…SDFSEDDTKS (105 aa)) is disordered. The span at 8–22 (QKADKVTKAKKRVAD) shows a compositional bias: basic and acidic residues. The segment covering 23–75 (EVDESESEPELQVEGLIDAEAESEDDESFESAEENASAEEDEEDEEDEEDSDA) has biased composition (acidic residues). Residues 264 to 382 (RFVPSKNEAK…LRKVPGYTES (119 aa)) are required for interaction with NOP7. Residues 382–418 (SVRERFERSLDLYLAPRMRKNKLNIDPESLIPELPSP) form a required for interaction with YTM1 region. WD repeat units lie at residues 434–473 (GHEG…EVYR), 482–522 (NPED…YDIE), 590–632 (VCKK…TQSP), 635–673 (KSKG…LVKK), 676–715 (PGAR…TPYK), 719–758 (YHDK…DMMK), and 775–805 (GHLG…MWTT).

It belongs to the WD repeat BOP1/ERB1 family. As to quaternary structure, component of the NOP7 complex, composed of ERB1, NOP7 and YTM1. The complex is held together by ERB1, which interacts with NOP7 via its N-terminal domain and with YTM1 via a high-affinity interaction between the seven-bladed beta-propeller domains of the 2 proteins. The NOP7 complex associates with the 66S pre-ribosome.

It is found in the nucleus. Its subcellular location is the nucleolus. The protein resides in the nucleoplasm. Functionally, component of the NOP7 complex, which is required for maturation of the 25S and 5.8S ribosomal RNAs and formation of the 60S ribosome. This is Ribosome biogenesis protein ERB1 from Candida glabrata (strain ATCC 2001 / BCRC 20586 / JCM 3761 / NBRC 0622 / NRRL Y-65 / CBS 138) (Yeast).